The primary structure comprises 147 residues: MRHYEIVFMVHPDQSEQVAGMIERYTGSIKDSGGQIHRLEDWGRRQMAYPINKLHKAHYVLMNIEAEQSVVDELESTFRFNDAVIRNMIMRAKNAVTEPSPMMKAKEERFTKRDDREERSDRSEAPRAEAPAKAEAPAKAEDEAAAE.

The segment at valine 96 to glutamate 147 is disordered. Positions lysine 104–glutamate 147 are enriched in basic and acidic residues.

This sequence belongs to the bacterial ribosomal protein bS6 family.

Binds together with bS18 to 16S ribosomal RNA. In Photobacterium profundum (strain SS9), this protein is Small ribosomal subunit protein bS6.